We begin with the raw amino-acid sequence, 233 residues long: Large ribosomal subunit protein uL1 (233 aa).

It belongs to the universal ribosomal protein uL1 family. Part of the 50S ribosomal subunit.

Binds directly to 23S rRNA. The L1 stalk is quite mobile in the ribosome, and is involved in E site tRNA release. In terms of biological role, protein L1 is also a translational repressor protein, it controls the translation of the L11 operon by binding to its mRNA. The polypeptide is Large ribosomal subunit protein uL1 (Shewanella pealeana (strain ATCC 700345 / ANG-SQ1)).